A 330-amino-acid polypeptide reads, in one-letter code: 6-methylsalicylic acid decarboxylase acuB (330 aa).

The Zn(2+) site is built by H6, H8, H156, and D276.

The protein belongs to the metallo-dependent hydrolases superfamily. ACMSD family. Monomer.

It localises to the cytoplasm. The protein resides in the cytosol. It catalyses the reaction 6-methylsalicylate + H(+) = 3-methylphenol + CO2. The protein operates within secondary metabolite biosynthesis. In terms of biological role, 6-methylsalicylic acid decarboxylase; part of the gene cluster that mediates the biosynthesis of aculins. The pathway begins with the synthesis of 6-methylsalicylic acid by the polyketide synthase (PKS) acuA via condensation of acetate and malonate units. The 6-methylsalicylic acid decarboxylase acuB then catalyzes the decarboxylation of 6-methylsalicylic acid to yield m-cresol (also known as 3-methylphenol). These first reactions occur in the cytosol. The intermediate m-cresol is then transported into the endoplasmic reticulum where the cytochrome P450 monooxygenase acuC converts it to m-hydroxybenzyl alcohol, which is further converted to gentisyl alcohol by the cytochrome P450 monooxygenase acuD. Gentisyl alcohol is further oxidized by the oxidoreductase acuE that probably catalyzes hydroxylation of the aromatic ring. The aromatic system might then be opened by oxidation through a Baeyer-Villiger type of oxidation, which could be catalyzed by acuF, with the carboxylic acid at C-1 subsequently reduced to an aldehyde by acuG. Subsequently, a hemiacetal is formed, before the dehydrogenase acuH would reduce the double bond between C-4 and C-6. Finally, keto-enol tautomerism results in formation of aculinic acid, which exists as two diastereomers (both R/S configurations at C-1) by non-enzymatic hemiacetal formation. The carboxypeptidase acuI could be involved in the linking of aculinic acid to an aculene A moiety produced by the aculene biosynthesis cluster and which leads to the production of aculin A. AcuI may also be involved in the attachment of proline to aculinic acid to form epi-aculins A and B. The chain is 6-methylsalicylic acid decarboxylase acuB from Aspergillus aculeatus (strain ATCC 16872 / CBS 172.66 / WB 5094).